Here is a 177-residue protein sequence, read N- to C-terminus: NAD(P)H-quinone oxidoreductase subunit 6, chloroplastic (177 aa).

5 helical membrane-spanning segments follow: residues 10–30 (FLLV…VLLT), 32–52 (PIFS…FYTP), 61–81 (AQLL…VMFM), 92–112 (LWTV…VSLI), and 152–172 (FFLP…GAIS).

The protein belongs to the complex I subunit 6 family. In terms of assembly, NDH is composed of at least 16 different subunits, 5 of which are encoded in the nucleus.

Its subcellular location is the plastid. The protein localises to the chloroplast thylakoid membrane. It carries out the reaction a plastoquinone + NADH + (n+1) H(+)(in) = a plastoquinol + NAD(+) + n H(+)(out). It catalyses the reaction a plastoquinone + NADPH + (n+1) H(+)(in) = a plastoquinol + NADP(+) + n H(+)(out). Functionally, NDH shuttles electrons from NAD(P)H:plastoquinone, via FMN and iron-sulfur (Fe-S) centers, to quinones in the photosynthetic chain and possibly in a chloroplast respiratory chain. The immediate electron acceptor for the enzyme in this species is believed to be plastoquinone. Couples the redox reaction to proton translocation, and thus conserves the redox energy in a proton gradient. The chain is NAD(P)H-quinone oxidoreductase subunit 6, chloroplastic (ndhG) from Ranunculus macranthus (Large buttercup).